The primary structure comprises 372 residues: Innexin shaking-B (372 aa).

Topologically, residues 1–21 are cytoplasmic; that stretch reads MLDIFRGLKNLVKVSHVKTDS. Residues 22–42 form a helical membrane-spanning segment; it reads IVFRLHYSITVMILMSFSLII. The Extracellular segment spans residues 43–110; it reads TTRQYVGNPI…PADKKHYKYY (68 aa). A helical transmembrane segment spans residues 111–131; sequence QWVCFCLFFQAILFYTPRWLW. The Cytoplasmic segment spans residues 132–182; sequence KSWEGGKIHALIMDLDIGICSEAEKKQKKKLLLDYLWENLRYHNWWAYRYY. A helical membrane pass occupies residues 183–203; the sequence is VCELLALINVIGQMFLMNRFF. At 204–267 the chain is on the extracellular side; the sequence is DGEFITFGLK…ILPLNVVNEK (64 aa). A helical membrane pass occupies residues 268-288; the sequence is IYIFLWFWFILLTFLTLLTLI. At 289-372 the chain is on the cytoplasmic side; sequence YRVVIIFSPR…PGLKGEIQDA (84 aa).

It belongs to the pannexin family. In terms of assembly, monomer (isoform Lethal). In terms of tissue distribution, isoform Neural is expressed in synapses of giant fibers (GF), in a large thoracic cell in location of postsynaptic target and optic lobe lamina and medulla. Isoform Lethal is expressed in embryonic mesodermal derivatives. During metamorphosis, both isoforms are dynamically expressed in pupal nervous system.

It localises to the cell membrane. It is found in the cell junction. The protein resides in the gap junction. Functionally, structural component of the gap junctions at electrical synapses in distal and mid-depth levels in the lamina. Isoform Lethal forms voltage sensitive intercellular channels through homotypic interactions. In Drosophila melanogaster (Fruit fly), this protein is Innexin shaking-B (shakB).